The chain runs to 310 residues: tRNA dimethylallyltransferase (310 aa).

Gly-14–Ser-21 is a binding site for ATP. Thr-16–Ser-21 provides a ligand contact to substrate. Interaction with substrate tRNA stretches follow at residues Asp-39–Gln-42 and Gln-163–Arg-167.

This sequence belongs to the IPP transferase family. As to quaternary structure, monomer. It depends on Mg(2+) as a cofactor.

It carries out the reaction adenosine(37) in tRNA + dimethylallyl diphosphate = N(6)-dimethylallyladenosine(37) in tRNA + diphosphate. Catalyzes the transfer of a dimethylallyl group onto the adenine at position 37 in tRNAs that read codons beginning with uridine, leading to the formation of N6-(dimethylallyl)adenosine (i(6)A). In Brucella ovis (strain ATCC 25840 / 63/290 / NCTC 10512), this protein is tRNA dimethylallyltransferase.